We begin with the raw amino-acid sequence, 129 residues long: Bacteriohemerythrin (129 aa).

The Fe cation site is built by H19, H59, E63, H78, H82, H119, and D124.

This sequence belongs to the hemerythrin family. In terms of assembly, monomer.

Functionally, oxygen-binding protein. May be involved in a storage mechanism or for delivery to oxygen-requiring enzymes. The oxygen-binding site contains two iron atoms. This Clostridium acetobutylicum (strain ATCC 824 / DSM 792 / JCM 1419 / IAM 19013 / LMG 5710 / NBRC 13948 / NRRL B-527 / VKM B-1787 / 2291 / W) protein is Bacteriohemerythrin.